The chain runs to 179 residues: B-cell acute lymphoblastic leukemia-expressed protein (179 aa).

Disordered regions lie at residues 1 to 20 and 65 to 86; these read MMKDIIPASSWASEESTDLQ and RDTPPPVTSPRGDGICVSRGKA. Residues 10-20 show a composition bias toward polar residues; the sequence is SWASEESTDLQ.

This chain is B-cell acute lymphoblastic leukemia-expressed protein (BLACE), found in Homo sapiens (Human).